A 265-amino-acid polypeptide reads, in one-letter code: 3-methyl-2-oxobutanoate hydroxymethyltransferase (265 aa).

2 residues coordinate Mg(2+): Asp-46 and Asp-85. 3-methyl-2-oxobutanoate-binding positions include 46–47 (DS), Asp-85, and Lys-114. Glu-116 is a Mg(2+) binding site. The Proton acceptor role is filled by Glu-183.

Belongs to the PanB family. As to quaternary structure, homodecamer; pentamer of dimers. It depends on Mg(2+) as a cofactor.

It localises to the cytoplasm. The catalysed reaction is 3-methyl-2-oxobutanoate + (6R)-5,10-methylene-5,6,7,8-tetrahydrofolate + H2O = 2-dehydropantoate + (6S)-5,6,7,8-tetrahydrofolate. It functions in the pathway cofactor biosynthesis; coenzyme A biosynthesis. Functionally, catalyzes the reversible reaction in which hydroxymethyl group from 5,10-methylenetetrahydrofolate is transferred onto alpha-ketoisovalerate to form ketopantoate. The sequence is that of 3-methyl-2-oxobutanoate hydroxymethyltransferase from Caldivirga maquilingensis (strain ATCC 700844 / DSM 13496 / JCM 10307 / IC-167).